The following is a 260-amino-acid chain: uncharacterized protein (260 aa).

The N-terminal stretch at Met-1–Gly-22 is a signal peptide. The N-palmitoyl cysteine moiety is linked to residue Cys-23. The S-diacylglycerol cysteine moiety is linked to residue Cys-23.

This sequence belongs to the staphylococcal tandem lipoprotein family.

The protein localises to the cell membrane. This is an uncharacterized protein from Staphylococcus aureus (strain MSSA476).